We begin with the raw amino-acid sequence, 340 residues long: Solute carrier family 35 member G3 (340 aa).

The segment at 11-31 (PDFTQPSPPSTPSSLTSNHHN) is disordered. 9 helical membrane passes run 39–59 (TKGLFVALLGGGLSAGFVGPF), 69–89 (LPSLELLIFRCLFHLPIALIL), 107–127 (FLHAILNVLSIGCAYSAVQVV), 160–180 (AWCGLFGSTLGLIIIVGPGLG), 189–209 (LYTALGYVLAFLGGLALSLGL), 223–243 (TVAFLFGLVGLIVSVPGLFVL), 257–277 (CMVAVGLLALVSFVCVSYAVT), 283–303 (LVCAVLHSEVVVALMLQYYVL), and 307–327 (VAPSDIMGAGVVLGSIAIITA). Residues 51–176 (LSAGFVGPFS…STLGLIIIVG (126 aa)) enclose the EamA 1 domain. The EamA 2 domain maps to 223 to 327 (TVAFLFGLVG…VLGSIAIITA (105 aa)).

This sequence belongs to the SLC35G solute transporter family.

The protein localises to the membrane. The protein is Solute carrier family 35 member G3 (Slc35g3) of Rattus norvegicus (Rat).